We begin with the raw amino-acid sequence, 471 residues long: Cytidine and dCMP deaminase domain-containing protein 1 (471 aa).

Residues 1 to 27 (MAESNSWRSHRESDGNRSIPNGDDARN) are disordered. 2 CMP/dCMP-type deaminase domains span residues 57–153 (LWME…LLSE) and 312–460 (GVIR…KLNG). Residues His99, Cys124, Cys127, and His393 each coordinate Zn(2+). Residue Glu395 is the Proton donor of the active site. The Zn(2+) site is built by Cys421 and Cys424.

This sequence belongs to the cytidine and deoxycytidylate deaminase family. The cofactor is Zn(2+).

It catalyses the reaction 2'-deoxycytidine + H2O + H(+) = 2'-deoxyuridine + NH4(+). The catalysed reaction is cytidine + H2O + H(+) = uridine + NH4(+). Its function is as follows. Catalyzes the deamination of cytidine and deoxycytidine into uridine and deoxyuridine, respectively. This chain is Cytidine and dCMP deaminase domain-containing protein 1 (cdadc1), found in Danio rerio (Zebrafish).